We begin with the raw amino-acid sequence, 343 residues long: F17e-G fimbrial adhesin (343 aa).

The N-terminal stretch at 1 to 22 is a signal peptide; sequence MTNFYKVFLAVFILVCCNISHA. The segment at 23-199 is receptor-binding lectin domain; that stretch reads AVSFIGSTEN…LNPFTLNDTV (177 aa). A carbohydrate is bound by residues 65–66, 110–111, and 138–141; these read AN, DT, and STQG. An intrachain disulfide couples Cys-75 to Cys-132. Residues 200-343 form a fimbrillin-binding domain region; the sequence is TSCRLLTPSA…GISTFTFSYQ (144 aa). The tract at residues 287 to 307 is disordered; sequence LKFGPDSPVKGNENQWQLSTG. Residues 298–307 show a composition bias toward polar residues; that stretch reads NENQWQLSTG.

This sequence belongs to the fimbrial protein family.

It localises to the fimbrium. Functionally, essential fimbrial adhesion factor that mediates binding to N-acetylglucosamine-containing receptors in the host intestinal microvilli, leading to colonization of the intestinal tissue, and diarrhea or septicemia. Also confers adhesiveness to laminin and basement membranes. The chain is F17e-G fimbrial adhesin (f17eG) from Escherichia coli.